Reading from the N-terminus, the 1132-residue chain is Tyrosine-protein kinase JAK2 (1132 aa).

The tract at residues 1-239 is interaction with cytokine/interferon/growth hormone receptors; it reads MGMACLTMTE…RYRFRRFIQQ (239 aa). An FERM domain is found at 37-380; it reads PVLQVYLYHS…GYYRLTADAH (344 aa). Tyrosine 119 carries the post-translational modification Phosphotyrosine; by autocatalysis. Residues tyrosine 372 and tyrosine 373 each carry the phosphotyrosine modification. The 82-residue stretch at 401–482 folds into the SH2; atypical domain; it reads HGPISMDFAI…NLKDLLNCYQ (82 aa). Serine 523 carries the post-translational modification Phosphoserine. A Protein kinase 1 domain is found at 545–809; sequence LIFNESLGQG…AVIRDLNSLF (265 aa). A phosphotyrosine mark is found at tyrosine 570 and tyrosine 813. One can recognise a Protein kinase 2 domain in the interval 849–1124; it reads LKFLQQLGKG…SFRDLSLRVD (276 aa). Residue 855-863 participates in ATP binding; the sequence is LGKGNFGSV. Phosphotyrosine; by autocatalysis is present on tyrosine 868. Lysine 882 provides a ligand contact to ATP. 2 positions are modified to phosphotyrosine; by autocatalysis: tyrosine 966 and tyrosine 972. Aspartate 976 (proton acceptor) is an active-site residue. 2 positions are modified to phosphotyrosine; by autocatalysis: tyrosine 1007 and tyrosine 1008.

This sequence belongs to the protein kinase superfamily. Tyr protein kinase family. JAK subfamily. Interacts with IL23R, SKB1 and STAM2. Interacts with EPOR. Interacts with LYN. Interacts with SIRPA. Interacts with SH2B1. Interacts with TEC. Interacts with IFNGR2 (via intracellular domain). Interacts with LEPR (Isoform B). Interacts with HSP90AB1; promotes functional activation in a heat shock-dependent manner. Interacts with STRA6. Interacts with ASB2; the interaction targets JAK2 for Notch-induced proteasomal degradation. Interacts with MPL/TPOR. The cofactor is Mg(2+). Autophosphorylated, leading to regulate its activity. Leptin promotes phosphorylation on tyrosine residues, including phosphorylation on Tyr-813. Autophosphorylation on Tyr-119 in response to EPO down-regulates its kinase activity. Autophosphorylation on Tyr-868, Tyr-966 and Tyr-972 in response to growth hormone (GH) are required for maximal kinase activity. Also phosphorylated by TEC. Phosphorylated on tyrosine residues in response to interferon gamma signaling. Phosphorylated on tyrosine residues in response to a signaling cascade that is activated by increased cellular retinol. In terms of processing, undergoes Notch-induced ubiquitination and subsequent proteasomal degradation which is mediated by ASB1 or ASB2, the substrate-recognition components of probable ECS E3 ubiquitin-protein ligase complexes. As to expression, ubiquitously expressed throughout most tissues.

It localises to the endomembrane system. Its subcellular location is the cytoplasm. The protein resides in the nucleus. It catalyses the reaction L-tyrosyl-[protein] + ATP = O-phospho-L-tyrosyl-[protein] + ADP + H(+). Its activity is regulated as follows. Regulated by autophosphorylation, can both activate or decrease activity. Heme regulates its activity by enhancing the phosphorylation on Tyr-1007 and Tyr-1008. Non-receptor tyrosine kinase involved in various processes such as cell growth, development, differentiation or histone modifications. Mediates essential signaling events in both innate and adaptive immunity. In the cytoplasm, plays a pivotal role in signal transduction via its association with type I receptors such as growth hormone (GHR), prolactin (PRLR), leptin (LEPR), erythropoietin (EPOR), thrombopoietin receptor (MPL/TPOR); or type II receptors including IFN-alpha, IFN-beta, IFN-gamma and multiple interleukins. Following ligand-binding to cell surface receptors, phosphorylates specific tyrosine residues on the cytoplasmic tails of the receptor, creating docking sites for STATs proteins. Subsequently, phosphorylates the STATs proteins once they are recruited to the receptor. Phosphorylated STATs then form homodimer or heterodimers and translocate to the nucleus to activate gene transcription. For example, cell stimulation with erythropoietin (EPO) during erythropoiesis leads to JAK2 autophosphorylation, activation, and its association with erythropoietin receptor (EPOR) that becomes phosphorylated in its cytoplasmic domain. Then, STAT5 (STAT5A or STAT5B) is recruited, phosphorylated and activated by JAK2. Once activated, dimerized STAT5 translocates into the nucleus and promotes the transcription of several essential genes involved in the modulation of erythropoiesis. Part of a signaling cascade that is activated by increased cellular retinol and that leads to the activation of STAT5 (STAT5A or STAT5B). In addition, JAK2 mediates angiotensin-2-induced ARHGEF1 phosphorylation. Plays a role in cell cycle by phosphorylating CDKN1B. Cooperates with TEC through reciprocal phosphorylation to mediate cytokine-driven activation of FOS transcription. In the nucleus, plays a key role in chromatin by specifically mediating phosphorylation of 'Tyr-41' of histone H3 (H3Y41ph), a specific tag that promotes exclusion of CBX5 (HP1 alpha) from chromatin. Up-regulates the potassium voltage-gated channel activity of KCNA3. The polypeptide is Tyrosine-protein kinase JAK2 (Mus musculus (Mouse)).